Reading from the N-terminus, the 459-residue chain is Cysteine--tRNA ligase (459 aa).

Cys-28 lines the Zn(2+) pocket. A 'HIGH' region motif is present at residues 30 to 40 (VTIYDLCHIGH). Positions 209, 234, and 238 each coordinate Zn(2+). Positions 266 to 270 (KMSKS) match the 'KMSKS' region motif. Position 269 (Lys-269) interacts with ATP.

This sequence belongs to the class-I aminoacyl-tRNA synthetase family. Monomer. Zn(2+) is required as a cofactor.

It is found in the cytoplasm. The enzyme catalyses tRNA(Cys) + L-cysteine + ATP = L-cysteinyl-tRNA(Cys) + AMP + diphosphate. This chain is Cysteine--tRNA ligase, found in Shewanella baltica (strain OS185).